The sequence spans 228 residues: L-ribulose-5-phosphate 4-epimerase UlaF (228 aa).

Residues 26–27 (GN), 43–44 (SG), and 72–73 (SS) each bind substrate. Zn(2+) is bound by residues D74, H93, and H95. D118 acts as the Proton donor/acceptor in catalysis. H167 lines the Zn(2+) pocket. The active-site Proton donor/acceptor is the Y225.

The protein belongs to the aldolase class II family. AraD/FucA subfamily. It depends on Zn(2+) as a cofactor.

The enzyme catalyses L-ribulose 5-phosphate = D-xylulose 5-phosphate. It participates in cofactor degradation; L-ascorbate degradation; D-xylulose 5-phosphate from L-ascorbate: step 4/4. Catalyzes the isomerization of L-ribulose 5-phosphate to D-xylulose 5-phosphate. Is involved in the anaerobic L-ascorbate utilization. This chain is L-ribulose-5-phosphate 4-epimerase UlaF, found in Escherichia coli O17:K52:H18 (strain UMN026 / ExPEC).